A 187-amino-acid polypeptide reads, in one-letter code: Adenylate kinase (187 aa).

Position 10–15 (10–15) interacts with ATP; sequence GSGKGT. Positions 30–59 are NMP; the sequence is STGDLLRAEVAAGSPLGLKAKEVMARGDLV. Residues Thr-31, Arg-36, 57–59, 85–88, and Gln-92 each bind AMP; these read DLV and GYPR. Residues 126-136 form an LID region; sequence GRAKAEGREDD. Arg-127 is an ATP binding site. AMP is bound by residues Arg-133 and Arg-144. Residue Gly-172 participates in ATP binding.

The protein belongs to the adenylate kinase family. In terms of assembly, monomer.

Its subcellular location is the cytoplasm. It catalyses the reaction AMP + ATP = 2 ADP. It functions in the pathway purine metabolism; AMP biosynthesis via salvage pathway; AMP from ADP: step 1/1. Catalyzes the reversible transfer of the terminal phosphate group between ATP and AMP. Plays an important role in cellular energy homeostasis and in adenine nucleotide metabolism. The sequence is that of Adenylate kinase from Xanthomonas oryzae pv. oryzae (strain MAFF 311018).